Consider the following 196-residue polypeptide: MYEYFKGIISKITAKYIVLEVNSIGYILHVANPYAYSGHLHQEAKVYVHQVVREDAELLYGFATEEEKQLFLSLISVSGIGPVSALAIIAADDNAGLVQAIEQKNITYLTKFPKIGKKTAQQMVLDLEGKVVAADGLAESKAPVQTVDNQELEEAMEAMLALGYKATELKKIKKFFEGTTDTAENYIKSALKMLVK.

The domain I stretch occupies residues Met1–Ala63. The domain II stretch occupies residues Thr64 to Ala142. The interval Pro143–Thr146 is flexible linker. The segment at Val147–Lys196 is domain III.

It belongs to the RuvA family. In terms of assembly, homotetramer. Forms an RuvA(8)-RuvB(12)-Holliday junction (HJ) complex. HJ DNA is sandwiched between 2 RuvA tetramers; dsDNA enters through RuvA and exits via RuvB. An RuvB hexamer assembles on each DNA strand where it exits the tetramer. Each RuvB hexamer is contacted by two RuvA subunits (via domain III) on 2 adjacent RuvB subunits; this complex drives branch migration. In the full resolvosome a probable DNA-RuvA(4)-RuvB(12)-RuvC(2) complex forms which resolves the HJ.

It is found in the cytoplasm. Functionally, the RuvA-RuvB-RuvC complex processes Holliday junction (HJ) DNA during genetic recombination and DNA repair, while the RuvA-RuvB complex plays an important role in the rescue of blocked DNA replication forks via replication fork reversal (RFR). RuvA specifically binds to HJ cruciform DNA, conferring on it an open structure. The RuvB hexamer acts as an ATP-dependent pump, pulling dsDNA into and through the RuvAB complex. HJ branch migration allows RuvC to scan DNA until it finds its consensus sequence, where it cleaves and resolves the cruciform DNA. The polypeptide is Holliday junction branch migration complex subunit RuvA (Streptococcus gordonii (strain Challis / ATCC 35105 / BCRC 15272 / CH1 / DL1 / V288)).